Consider the following 163-residue polypeptide: Low molecular weight protein-tyrosine phosphatase A (163 aa).

Catalysis depends on Cys11, which acts as the Nucleophile. The active site involves Arg17. Asp126 (proton donor) is an active-site residue.

This sequence belongs to the low molecular weight phosphotyrosine protein phosphatase family.

The enzyme catalyses O-phospho-L-tyrosyl-[protein] + H2O = L-tyrosyl-[protein] + phosphate. Key virulence factor required for mycobacterial survival within host macrophages. Exhibits protein tyrosine phosphatase activity. Functionally, supports mycobacteria survival during infection by modulation of the phagosome maturation and modulation of the normal host signaling pathways, including host innate immune responses and cell apoptosis. In Mycobacterium bovis (strain ATCC BAA-935 / AF2122/97), this protein is Low molecular weight protein-tyrosine phosphatase A (ptpA).